The chain runs to 176 residues: Disulfide bond formation protein B (176 aa).

Topologically, residues 1 to 14 (MLRFLNQCSRGRGA) are cytoplasmic. Residues 15–31 (WLLMAFTALALEMVALW) form a helical membrane-spanning segment. At 32 to 49 (FQHVMLLKPCVLCIYERC) the chain is on the periplasmic side. A disulfide bond links Cys41 and Cys44. The chain crosses the membrane as a helical span at residues 50–65 (ALFGVMGAGLVGAIAP). The Cytoplasmic portion of the chain corresponds to 66–71 (KTPLRY). Residues 72–89 (VAMVIWIYSAWRGLQLAY) traverse the membrane as a helical segment. Topologically, residues 90-144 (EHTMIQLHPSPFMTCDFMARFPDWLPLGKWLPQVFVASGDCAERQWSFLTLEMPQ) are periplasmic. Cysteines 104 and 130 form a disulfide. A helical transmembrane segment spans residues 145-163 (WLLGIFAAYLVVAIAVVIA). Residues 164 to 176 (QAFKPKKRDLFGR) lie on the Cytoplasmic side of the membrane.

The protein belongs to the DsbB family.

It localises to the cell inner membrane. Required for disulfide bond formation in some periplasmic proteins. Acts by oxidizing the DsbA protein. The chain is Disulfide bond formation protein B from Salmonella paratyphi A (strain ATCC 9150 / SARB42).